A 494-amino-acid chain; its full sequence is Uric acid degradation bifunctional protein PucL (494 aa).

The OHCU decarboxylase stretch occupies residues 1–174 (MFTMDDLNQM…EKGETQMKRT (174 aa)). His-68 serves as the catalytic Proton donor; for OHCU decarboxylase activity. Residues Pro-69, 81–85 (SVREQ), and 116–120 (FILAV) contribute to the 5-hydroxy-2-oxo-4-ureido-2,5-dihydro-1H-imidazole-5-carboxylate site. The segment at 175–494 (MSYGKGNVFA…AAEKCRSLKA (320 aa)) is urate oxidase. Lys-179 functions as the Charge relay system; for urate oxidase activity in the catalytic mechanism. Lys-190 acts as the Charge relay system in catalysis. Catalysis depends on Thr-239, which acts as the Charge relay system; for urate oxidase activity. Residues Thr-239, Asp-240, Phe-349, Arg-366, Ile-414, Gln-415, and Asn-441 each contribute to the urate site.

It in the N-terminal section; belongs to the OHCU decarboxylase family. This sequence in the C-terminal section; belongs to the uricase family.

It carries out the reaction 5-hydroxy-2-oxo-4-ureido-2,5-dihydro-1H-imidazole-5-carboxylate + H(+) = (S)-allantoin + CO2. It catalyses the reaction urate + O2 + H2O = 5-hydroxyisourate + H2O2. Its pathway is purine metabolism; urate degradation; (S)-allantoin from urate: step 1/3. The protein operates within purine metabolism; urate degradation; (S)-allantoin from urate: step 3/3. In terms of biological role, catalyzes two steps in the degradation of uric acid, i.e. the oxidation of uric acid to 5-hydroxyisourate (HIU) and the stereoselective decarboxylation of 2-oxo-4-hydroxy-4-carboxy-5-ureidoimidazoline (OHCU) to (S)-allantoin. The chain is Uric acid degradation bifunctional protein PucL (pucL) from Bacillus subtilis (strain 168).